The following is a 371-amino-acid chain: GDP-mannose transporter (371 aa).

Residues 1–51 are Cytoplasmic-facing; the sequence is MGVISFYLIGQLLYLIRKKYTTTYRQQQQHQYNMDSKHSTSSSSSGSLATR. A helical transmembrane segment spans residues 52-72; it reads ISNSGPISIAAYCLSSILMTV. Residues 73-80 are Lumenal-facing; sequence TNKYVLSG. Residues 81–101 traverse the membrane as a helical segment; the sequence is FSFNLNFFLLAVQSIVCIVTI. The Cytoplasmic segment spans residues 102-121; that stretch reads GSLKSLNIITYRQFNKDEAK. A helical membrane pass occupies residues 122-138; the sequence is KWSPIAFLLVAMIYTSS. Residues 139–145 lie on the Lumenal side of the membrane; sequence KALQYLS. A helical membrane pass occupies residues 146–162; it reads IPVYTIFKNLTIILIAY. Residues 163-171 lie on the Cytoplasmic side of the membrane; the sequence is GEVIWFGGK. A helical membrane pass occupies residues 172-192; the sequence is VTTMALSSFLLMVLSSVIAYY. Topologically, residues 193 to 206 are lumenal; that stretch reads GDNAAVKSHDDAFA. Residues 207 to 227 traverse the membrane as a helical segment; the sequence is LYLGYFWMLTNCFASAAFVLI. Residues 228–241 lie on the Cytoplasmic side of the membrane; the sequence is MRKRIKLTNFKDFD. A helical membrane pass occupies residues 242–262; the sequence is TMYYNNLLSIPILLICSFIFE. The Lumenal segment spans residues 263-281; that stretch reads DWSSANVSLNFPADNRVTT. N-linked (GlcNAc...) asparagine glycosylation occurs at Asn268. Residues 282–302 traverse the membrane as a helical segment; sequence ITAMILSGASSVGISYCSAWC. At 303–309 the chain is on the cytoplasmic side; the sequence is VRVTSST. The helical transmembrane segment at 310–329 threads the bilayer; sequence TYSMVGALNKLPIALSGLIF. The Lumenal portion of the chain corresponds to 330–332; sequence FEA. The chain crosses the membrane as a helical span at residues 333–355; that stretch reads AVNFWSVSSIFVGFGAGLVYAVA. The Cytoplasmic segment spans residues 356 to 371; it reads KQKQQKEQSQQLPTTK.

Belongs to the TPT transporter family. SLC35D subfamily. As to quaternary structure, homooligomer.

Its subcellular location is the golgi apparatus membrane. It localises to the cytoplasmic vesicle membrane. The protein resides in the endoplasmic reticulum membrane. In terms of biological role, involved in the import of GDP-mannose from the cytoplasm into the Golgi lumen. Involved in hyphal formation. The polypeptide is GDP-mannose transporter (VRG4) (Candida albicans (strain SC5314 / ATCC MYA-2876) (Yeast)).